Here is a 457-residue protein sequence, read N- to C-terminus: Protein translocase subunit SecY (457 aa).

A run of 10 helical transmembrane segments spans residues 17–37 (IFFT…PVPG), 75–95 (IALG…LVVF), 120–140 (LFTL…ALRM), 163–183 (VFYL…MWIG), 195–215 (ISLI…GSIF), 230–250 (IVSL…TVLI), 287–307 (VIPV…GQFL), 326–346 (VVYS…WTAT), 386–406 (LLGA…GRIL), and 412–432 (VSYF…LDTM).

This sequence belongs to the SecY/SEC61-alpha family. Component of the Sec protein translocase complex. Heterotrimer consisting of SecY, SecE and SecG subunits. The heterotrimers can form oligomers, although 1 heterotrimer is thought to be able to translocate proteins. Interacts with the ribosome. Interacts with SecDF, and other proteins may be involved. Interacts with SecA.

Its subcellular location is the cell inner membrane. Its function is as follows. The central subunit of the protein translocation channel SecYEG. Consists of two halves formed by TMs 1-5 and 6-10. These two domains form a lateral gate at the front which open onto the bilayer between TMs 2 and 7, and are clamped together by SecE at the back. The channel is closed by both a pore ring composed of hydrophobic SecY resides and a short helix (helix 2A) on the extracellular side of the membrane which forms a plug. The plug probably moves laterally to allow the channel to open. The ring and the pore may move independently. This is Protein translocase subunit SecY from Chlamydia muridarum (strain MoPn / Nigg).